A 523-amino-acid polypeptide reads, in one-letter code: Putative glycerol-3-phosphate transporter 1 (523 aa).

12 helical membrane-spanning segments follow: residues 29–49 (LSYS…YASY), 102–122 (VLLG…MYFA), 133–153 (IFLT…GVGY), 163–183 (FLIM…SVVA), 196–216 (LIMG…SLIA), 228–248 (FVVP…FLPV), 306–326 (FALC…WLPF), 344–364 (GNLS…AGYI), 368–388 (IGAR…ALFF), 402–422 (SLMF…TTAV), 444–464 (AIID…TGYI), and 468–488 (GSWT…GLLL).

Belongs to the major facilitator superfamily. Organophosphate:Pi antiporter (OPA) (TC 2.A.1.4) family.

It is found in the membrane. This Arabidopsis thaliana (Mouse-ear cress) protein is Putative glycerol-3-phosphate transporter 1.